The following is a 285-amino-acid chain: MGYAHPEVLVSTDWVQEHLEDPKVRVLEVDEDILLYDTGHIPGAQKIDWQRDFWDPVVRDFISEEEFAKLMERLGISNDTTVVLYGDKNNWWAAYAFWFFKYNGHKDVRLMNGGRQKWVEEGRPLTTEVPSYPPGRYEVPYRDESIRAYRDDVLEHIIKVKEGKGALVDVRSPQEYRGELTHMPDYPQEGALRAGHIPGAKNIPWAKAVNPDGTFKSAEELRALYEPLGITKDKDIVVYCRIAERSSHSWFVLKYLLGYPHVKNYDGSWTEWGNLVGVPIAKGEE.

Rhodanese domains lie at 20 to 127 and 161 to 281; these read EDPK…PLTT and KEGK…VPIA. Cys240 carries the post-translational modification Cysteine persulfide.

Cys-240 can accept a sulfur atom as persulfide forms from cysteine desulfurases IscS and SufS.

The protein operates within tRNA modification. Its function is as follows. Required for the efficient 2-thiolation of 5-methyluridine residue at position 54 in the T loop of tRNAs, leading to 5-methyl-2-thiouridine (m(5)s(2)U or s(2)T). TtuD is a sulfur carrier protein that has a role to direct sulfur flow from cysteine desulfurases to m(5)s(2)U synthesis in vivo. It enhances the cysteine desulfurase activity of IscS and SufS, as well as the formation of thiocarboxylated TtuB (TtuB-COSH) in the presence of these desulfurases. This Thermus thermophilus (strain ATCC BAA-163 / DSM 7039 / HB27) protein is Sulfur carrier protein TtuD.